The following is a 178-amino-acid chain: Large ribosomal subunit protein uL6 (178 aa).

This sequence belongs to the universal ribosomal protein uL6 family. In terms of assembly, part of the 50S ribosomal subunit.

Functionally, this protein binds to the 23S rRNA, and is important in its secondary structure. It is located near the subunit interface in the base of the L7/L12 stalk, and near the tRNA binding site of the peptidyltransferase center. This Enterococcus faecalis (strain ATCC 700802 / V583) protein is Large ribosomal subunit protein uL6.